Reading from the N-terminus, the 60-residue chain is MAKKESFFKGVKSEMEKTSWPTKEELFKYTVIVVSTVIFFLVFFYALDLGITALKNLLFG.

A helical membrane pass occupies residues 31-51 (VIVVSTVIFFLVFFYALDLGI).

It belongs to the SecE/SEC61-gamma family. Component of the Sec protein translocase complex. Heterotrimer consisting of SecY, SecE and SecG subunits. The heterotrimers can form oligomers, although 1 heterotrimer is thought to be able to translocate proteins. Interacts with the ribosome. Interacts with SecDF, and other proteins may be involved. Interacts with SecA.

It localises to the cell membrane. Functionally, essential subunit of the Sec protein translocation channel SecYEG. Clamps together the 2 halves of SecY. May contact the channel plug during translocation. The protein is Protein translocase subunit SecE of Staphylococcus aureus (strain Mu50 / ATCC 700699).